The following is a 530-amino-acid chain: Autoinducer-2 kinase (530 aa).

This sequence belongs to the FGGY kinase family.

The protein localises to the cytoplasm. It catalyses the reaction (S)-4,5-dihydroxypentane-2,3-dione + ATP = (2S)-2-hydroxy-3,4-dioxopentyl phosphate + ADP + H(+). Its function is as follows. Catalyzes the phosphorylation of autoinducer-2 (AI-2) to phospho-AI-2, which subsequently inactivates the transcriptional regulator LsrR and leads to the transcription of the lsr operon. Phosphorylates the ring-open form of (S)-4,5-dihydroxypentane-2,3-dione (DPD), which is the precursor to all AI-2 signaling molecules, at the C5 position. The protein is Autoinducer-2 kinase of Salmonella paratyphi B (strain ATCC BAA-1250 / SPB7).